The sequence spans 291 residues: ATP synthase gamma chain (291 aa).

The protein belongs to the ATPase gamma chain family. In terms of assembly, F-type ATPases have 2 components, CF(1) - the catalytic core - and CF(0) - the membrane proton channel. CF(1) has five subunits: alpha(3), beta(3), gamma(1), delta(1), epsilon(1). CF(0) has three main subunits: a, b and c.

It is found in the cell inner membrane. In terms of biological role, produces ATP from ADP in the presence of a proton gradient across the membrane. The gamma chain is believed to be important in regulating ATPase activity and the flow of protons through the CF(0) complex. This Burkholderia multivorans (strain ATCC 17616 / 249) protein is ATP synthase gamma chain.